Here is a 332-residue protein sequence, read N- to C-terminus: Phosphate acetyltransferase (332 aa).

The protein belongs to the phosphate acetyltransferase and butyryltransferase family.

The protein localises to the cytoplasm. It catalyses the reaction acetyl-CoA + phosphate = acetyl phosphate + CoA. The protein operates within metabolic intermediate biosynthesis; acetyl-CoA biosynthesis; acetyl-CoA from acetate: step 2/2. The polypeptide is Phosphate acetyltransferase (pta) (Acetivibrio thermocellus (strain ATCC 27405 / DSM 1237 / JCM 9322 / NBRC 103400 / NCIMB 10682 / NRRL B-4536 / VPI 7372) (Clostridium thermocellum)).